The primary structure comprises 270 residues: DNA-directed RNA polymerase subunit Rpo3 (270 aa).

3 residues coordinate [3Fe-4S] cluster: Cys206, Cys209, and Cys212.

Belongs to the archaeal Rpo3/eukaryotic RPB3 RNA polymerase subunit family. Part of the RNA polymerase complex. [3Fe-4S] cluster serves as cofactor.

The protein resides in the cytoplasm. The catalysed reaction is RNA(n) + a ribonucleoside 5'-triphosphate = RNA(n+1) + diphosphate. Its function is as follows. DNA-dependent RNA polymerase (RNAP) catalyzes the transcription of DNA into RNA using the four ribonucleoside triphosphates as substrates. The polypeptide is DNA-directed RNA polymerase subunit Rpo3 (Methanosphaera stadtmanae (strain ATCC 43021 / DSM 3091 / JCM 11832 / MCB-3)).